Reading from the N-terminus, the 558-residue chain is Glucose-6-phosphate isomerase (558 aa).

E362 functions as the Proton donor in the catalytic mechanism. Residues H393 and K523 contribute to the active site.

This sequence belongs to the GPI family.

The protein resides in the cytoplasm. It catalyses the reaction alpha-D-glucose 6-phosphate = beta-D-fructose 6-phosphate. The protein operates within carbohydrate degradation; glycolysis; D-glyceraldehyde 3-phosphate and glycerone phosphate from D-glucose: step 2/4. This chain is Glucose-6-phosphate isomerase (Pgi), found in Drosophila melanogaster (Fruit fly).